The sequence spans 133 residues: Small ribosomal subunit protein uS11 (133 aa).

The protein belongs to the universal ribosomal protein uS11 family. Part of the 30S ribosomal subunit. Interacts with proteins S7 and S18. Binds to IF-3.

Located on the platform of the 30S subunit, it bridges several disparate RNA helices of the 16S rRNA. Forms part of the Shine-Dalgarno cleft in the 70S ribosome. The polypeptide is Small ribosomal subunit protein uS11 (Methylibium petroleiphilum (strain ATCC BAA-1232 / LMG 22953 / PM1)).